Reading from the N-terminus, the 333-residue chain is Anthranilate phosphoribosyltransferase (333 aa).

5-phospho-alpha-D-ribose 1-diphosphate contacts are provided by residues G80, 83–84 (GD), T88, 90–93 (NLST), 108–116 (KHGNRSASG), and S120. An anthranilate-binding site is contributed by G80. Mg(2+) is bound at residue S92. N111 is an anthranilate binding site. R166 is a binding site for anthranilate. Residues D224 and E225 each contribute to the Mg(2+) site.

This sequence belongs to the anthranilate phosphoribosyltransferase family. Homodimer. Requires Mg(2+) as cofactor.

The catalysed reaction is N-(5-phospho-beta-D-ribosyl)anthranilate + diphosphate = 5-phospho-alpha-D-ribose 1-diphosphate + anthranilate. It participates in amino-acid biosynthesis; L-tryptophan biosynthesis; L-tryptophan from chorismate: step 2/5. Catalyzes the transfer of the phosphoribosyl group of 5-phosphorylribose-1-pyrophosphate (PRPP) to anthranilate to yield N-(5'-phosphoribosyl)-anthranilate (PRA). The protein is Anthranilate phosphoribosyltransferase of Pyrobaculum arsenaticum (strain DSM 13514 / JCM 11321 / PZ6).